Consider the following 258-residue polypeptide: Axonemal dynein light intermediate polypeptide 1 (258 aa).

2 disordered regions span residues 1–60 (MIPP…CVPD) and 207–231 (VNEQ…EEKK). Residues 34–44 (SPQQPGPSGSA) are compositionally biased toward low complexity. A coiled-coil region spans residues 176–255 (MRKALQAEQG…LKAQLEGIIA (80 aa)).

The protein belongs to the inner dynein arm light chain family. As to quaternary structure, interacts with CFAP45. Interacts with DYNC1H1. In terms of tissue distribution, expressed in many tissues. A smaller 0.9 kb and a larger 2.5 kb transcripts were detected at the highest level in the testis, at medium levels in the prostate, heart, liver, lung and pancreas, at low levels in the ovary, skeletal muscle and small intestine. Not detected in spleen, colon epithelium, thymus or peripheral blood leukocytes. The 0.9 kb transcript is expressed at a 20-fold higher level than the 2.5 kb transcript in the testis. Expressed in spermatozoa and airway epithelial cells (at protein level).

Its subcellular location is the cell projection. The protein localises to the cilium. The protein resides in the flagellum. It localises to the dynein axonemal particle. It is found in the cytoplasm. In terms of biological role, involved in sperm flagellum assembly. In Homo sapiens (Human), this protein is Axonemal dynein light intermediate polypeptide 1.